The primary structure comprises 162 residues: Cadmium metallothionein (162 aa).

The propeptide occupies 1 to 2 (MD).

The metallothioneins are involved in the cellular sequestration of toxic metal ions. This Tetrahymena thermophila protein is Cadmium metallothionein (MTT1).